Here is a 256-residue protein sequence, read N- to C-terminus: Galactitol 2-dehydrogenase (256 aa).

NAD(+)-binding positions include 15–17 (RGI), aspartate 36, 59–60 (DV), asparagine 86, tyrosine 152, and lysine 156. The active-site Proton acceptor is tyrosine 152.

The protein belongs to the short-chain dehydrogenases/reductases (SDR) family.

The catalysed reaction is galactitol + NAD(+) = keto-D-tagatose + NADH + H(+). It carries out the reaction keto-D-fructose + NADH + H(+) = D-sorbitol + NAD(+). Its pathway is carbohydrate metabolism. Functionally, involved in galactitol catabolism. Catalyzes the oxidation of galactitol to D-tagatose. Can also catalyze the oxidation of D-sorbitol to D-fructose. The polypeptide is Galactitol 2-dehydrogenase (Agrobacterium fabrum (strain C58 / ATCC 33970) (Agrobacterium tumefaciens (strain C58))).